The following is a 425-amino-acid chain: MADKEAAFDDAVEERVINEEYKIWKKNTPFLYDLVMTHALEWPSLTAQWLPDVTRPEGKDFSIHRLVLGTHTSDEQNHLVIASVQLPNDDAQFDASHYDSEKGEFGGFGSVSGKIEIEIKINHEGEVNRARYMPQNPCIIATKTPSSDVLVFDYTKHPSKPDPSGECNPDLRLRGHQKEGYGLSWNPNLSGHLLSASDDHTICLWDISAVPKEGKVVDAKTIFTGHTAVVEDVSWHLLHESLFGSVADDQKLMIWDTRSNNTSKPSHSVDAHTAEVNCLSFNPYSEFILATGSADKTVALWDLRNLKLKLHSFESHKDEIFQVQWSPHNETILASSGTDRRLNVWDLSKIGEEQSPEDAEDGPPELLFIHGGHTAKISDFSWNPNEPWVICSVSEDNIMQVWQMAENINNDEDPEGSVDPEGQGS.

The residue at position 2 (Ala-2) is an N-acetylalanine. WD repeat units follow at residues Tyr-32 to Gly-125, Glu-126 to Gly-175, His-176 to Phe-223, Gly-225 to Asp-270, Ala-271 to Glu-314, Ser-315 to Gly-371, and Gly-372 to Met-404. The tract at residues Asp-361–Glu-406 is interaction with HAT1.

The protein belongs to the WD repeat RBAP46/RBAP48/MSI1 family. As to quaternary structure, binds directly to histone H4, probably via helix 1 of the histone fold, a region that is not accessible when histone H4 is in chromatin. Interacts with CHAF1A, HDAC1, HDAC2, HDAC3 and HIRA. May also interact with HAT1.

Its subcellular location is the nucleus. It localises to the chromosome. The protein localises to the telomere. In terms of biological role, core histone-binding subunit that may target chromatin assembly factors, chromatin remodeling factors and histone deacetylases to their histone substrates in a manner that is regulated by nucleosomal DNA. Component of several complexes which regulate chromatin metabolism. The polypeptide is Histone-binding protein RBBP4 (RBBP4) (Gallus gallus (Chicken)).